The sequence spans 529 residues: Delayed-rectifier potassium channel regulatory subunit KCNS1 (529 aa).

The Cytoplasmic portion of the chain corresponds to 1 to 217 (MLMLLVRGTH…LTMENPGYSL (217 aa)). Residues 218-239 (PSKLFSCVSIGVVLASIAAMCI) form a helical membrane-spanning segment. Over 240–270 (HSLPEYQAREAAAAVATVAAGRSAEDVRDDP) the chain is Extracellular. Residues 271–293 (VLRRLEYFCIAWFSFEVSSRLLL) traverse the membrane as a helical segment. The Cytoplasmic portion of the chain corresponds to 294–304 (APSTRNFFCHP). Residues 305–322 (LNLIDIVSVLPFYLTLLA) form a helical membrane-spanning segment. Topologically, residues 323 to 342 (SVALGGNNHGGTSGEELGHL) are extracellular. A helical; Voltage-sensor membrane pass occupies residues 343 to 363 (GKVVQVFRLMRIFRVLKLARH). The Cytoplasmic segment spans residues 364-378 (STGLRSLGATLKHSY). The helical transmembrane segment at 379-400 (REVGILLLYLAVGVSVFSGVAY) threads the bilayer. Residues 401-413 (TAEKEEDVGFDTI) lie on the Extracellular side of the membrane. Positions 414-425 (PACWWWGTVSMT) form an intramembrane region, helical. The Selectivity filter signature appears at 426-431 (TVGYGD). Residues 426-433 (TVGYGDVV) lie within the membrane without spanning it. The Extracellular portion of the chain corresponds to 434-440 (PVTLAGK). Residues 441 to 469 (LAASGCILGGILVVALPITIIFNKFSHFY) form a helical membrane-spanning segment. The Cytoplasmic segment spans residues 470-529 (QRQKALEAAVRNSGHREFEDLLSSVDGVSDASLETSRETSQEGRSADLEAPSESPKPQIY). The disordered stretch occupies residues 498-529 (SDASLETSRETSQEGRSADLEAPSESPKPQIY). Residues 504–516 (TSRETSQEGRSAD) are compositionally biased toward basic and acidic residues.

The protein belongs to the potassium channel family. S (TC 1.A.1.2) subfamily. Kv9.1/KCNS1 sub-subfamily. As to quaternary structure, heterotetramer with KCNB1. Heterotetramer with KCNB2. Does not form homomultimers.

Its subcellular location is the cell membrane. In terms of biological role, potassium channel regulatory subunit that modulate the delayed rectifier voltage-gated potassium channel activity of KCNB1 and KCNB2 by altering their kinetics, expression levels, and shifting the half-inactivation potential to more polarized values. While it does not form functional channels on its own, it can form functional heterotetrameric channels with KCNB1 and KCNB2. Each regulatory subunit has unique regulatory properties that can lead to extensive inhibition, significant changes in kinetics, and/or substantial shifts in the voltage dependencies of the inactivation process. The sequence is that of Delayed-rectifier potassium channel regulatory subunit KCNS1 from Lemur catta (Ring-tailed lemur).